The sequence spans 476 residues: Glycogen synthase (476 aa).

Lys15 contributes to the ADP-alpha-D-glucose binding site.

It belongs to the glycosyltransferase 1 family. Bacterial/plant glycogen synthase subfamily.

The catalysed reaction is [(1-&gt;4)-alpha-D-glucosyl](n) + ADP-alpha-D-glucose = [(1-&gt;4)-alpha-D-glucosyl](n+1) + ADP + H(+). The protein operates within glycan biosynthesis; glycogen biosynthesis. In terms of biological role, synthesizes alpha-1,4-glucan chains using ADP-glucose. In Streptococcus equi subsp. equi (strain 4047), this protein is Glycogen synthase.